We begin with the raw amino-acid sequence, 124 residues long: Small ribosomal subunit protein uS12 (124 aa).

A disordered region spans residues 1–28; that stretch reads MPTISQLVGSERKRLTKKTKSPALKSCP. Residue D89 is modified to 3-methylthioaspartic acid. The interval 104–124 is disordered; it reads TAGVKDRRQSRSKYGAKAPKD.

The protein belongs to the universal ribosomal protein uS12 family. In terms of assembly, part of the 30S ribosomal subunit. Contacts proteins S8 and S17. May interact with IF1 in the 30S initiation complex.

In terms of biological role, with S4 and S5 plays an important role in translational accuracy. Its function is as follows. Interacts with and stabilizes bases of the 16S rRNA that are involved in tRNA selection in the A site and with the mRNA backbone. Located at the interface of the 30S and 50S subunits, it traverses the body of the 30S subunit contacting proteins on the other side and probably holding the rRNA structure together. The combined cluster of proteins S8, S12 and S17 appears to hold together the shoulder and platform of the 30S subunit. The polypeptide is Small ribosomal subunit protein uS12 (Prochlorococcus marinus (strain MIT 9301)).